The primary structure comprises 139 residues: Large-conductance mechanosensitive channel (139 aa).

Helical transmembrane passes span 9–29 (AFAVKGNVVDMAVGIIIGAAF) and 79–99 (IQTVIDFVIVAFAIFMGVKAI).

This sequence belongs to the MscL family. As to quaternary structure, homopentamer.

The protein localises to the cell inner membrane. Functionally, channel that opens in response to stretch forces in the membrane lipid bilayer. May participate in the regulation of osmotic pressure changes within the cell. The polypeptide is Large-conductance mechanosensitive channel (Pseudomonas putida (strain W619)).